The following is a 273-amino-acid chain: 3-methyl-2-oxobutanoate hydroxymethyltransferase (273 aa).

2 residues coordinate Mg(2+): Asp49 and Asp88. Residues Asp49 to Ser50, Asp88, and Lys118 each bind 3-methyl-2-oxobutanoate. Position 120 (Glu120) interacts with Mg(2+). Glu187 (proton acceptor) is an active-site residue.

It belongs to the PanB family. As to quaternary structure, homodecamer; pentamer of dimers. It depends on Mg(2+) as a cofactor.

The protein localises to the cytoplasm. It catalyses the reaction 3-methyl-2-oxobutanoate + (6R)-5,10-methylene-5,6,7,8-tetrahydrofolate + H2O = 2-dehydropantoate + (6S)-5,6,7,8-tetrahydrofolate. It functions in the pathway cofactor biosynthesis; (R)-pantothenate biosynthesis; (R)-pantoate from 3-methyl-2-oxobutanoate: step 1/2. Catalyzes the reversible reaction in which hydroxymethyl group from 5,10-methylenetetrahydrofolate is transferred onto alpha-ketoisovalerate to form ketopantoate. This chain is 3-methyl-2-oxobutanoate hydroxymethyltransferase, found in Sinorhizobium medicae (strain WSM419) (Ensifer medicae).